We begin with the raw amino-acid sequence, 137 residues long: Actin-depolymerizing factor 2 (137 aa).

The ADF-H domain occupies 5-137 (ASGMAVHDDC…GLDVFKSRTN (133 aa)). S6 carries the post-translational modification Phosphoserine.

The protein belongs to the actin-binding proteins ADF family. In terms of assembly, interacts with AIP1-1.

Its subcellular location is the cytoplasm. The protein localises to the cytoskeleton. In terms of biological role, actin-depolymerizing protein. Severs actin filaments (F-actin) and binds to actin monomers. Required for normal cell growth, plant development, cell organ expansion and flowering. Essential for root-knot nematode infection. The sequence is that of Actin-depolymerizing factor 2 (ADF2) from Arabidopsis thaliana (Mouse-ear cress).